The following is a 256-amino-acid chain: Rano class II histocompatibility antigen, B alpha chain (256 aa).

Residues 1–23 (MPLSRALILGVLALTTMLSPCGG) form the signal peptide. Positions 24-111 (QDDIEADHVG…KRSNSTPAVN (88 aa)) are alpha-1. The Extracellular portion of the chain corresponds to 24–218 (QDDIEADHVG…IPAPMSELTE (195 aa)). An Ig-like C1-type domain is found at 108–206 (PAVNEVPEAT…LDEPVLRHWE (99 aa)). The interval 112 to 205 (EVPEATVFSK…SLDEPVLRHW (94 aa)) is alpha-2. Cysteines 134 and 190 form a disulfide. N145 carries an N-linked (GlcNAc...) asparagine glycan. A connecting peptide region spans residues 206–218 (EPEIPAPMSELTE). Residues 219–244 (TVVCALGLSVGLVGIVVGTIFIIQGL) form a helical membrane-spanning segment. Residues 245–256 (RSVAPSRHPGPL) are Cytoplasmic-facing.

It belongs to the MHC class II family.

It is found in the membrane. In Rattus norvegicus (Rat), this protein is Rano class II histocompatibility antigen, B alpha chain (RT1-Ba).